Reading from the N-terminus, the 301-residue chain is D-alanine--D-alanine ligase (301 aa).

Positions 102–295 (KAVFAAAGLP…FPALCAWMVE (194 aa)) constitute an ATP-grasp domain. 128 to 181 (PLPRPYVIKPVNEGSSVGVFILREGDNRRADIARAWRHGSVAMTEEYVPGRELT) contributes to the ATP binding site. The Mg(2+) site is built by aspartate 248, glutamate 262, and asparagine 264.

This sequence belongs to the D-alanine--D-alanine ligase family. The cofactor is Mg(2+). It depends on Mn(2+) as a cofactor.

Its subcellular location is the cytoplasm. The catalysed reaction is 2 D-alanine + ATP = D-alanyl-D-alanine + ADP + phosphate + H(+). Its pathway is cell wall biogenesis; peptidoglycan biosynthesis. Cell wall formation. The protein is D-alanine--D-alanine ligase of Acidiphilium cryptum (strain JF-5).